A 1264-amino-acid polypeptide reads, in one-letter code: Protein fantom (1264 aa).

Coiled coils occupy residues 64–143 (LKQH…LQVQ), 196–268 (YSNS…NVET), 299–454 (LRIS…ESDI), and 488–555 (NKDL…VHLL). 2 C2 domains span residues 577–714 (KQYK…FCTT) and 773–897 (AATT…SGIF). Disordered stretches follow at residues 979–1018 (DTIS…YPSK) and 1047–1093 (QLAS…NTKQ). Over residues 1056–1080 (SEDETEITEELEPEDEDRSASDSDD) the composition is skewed to acidic residues.

It belongs to the RPGRIP1 family. In terms of assembly, interacts with NPHP4 and NPHP1; NPHP1, NPHP4 and RPGRIP1L are proposed to form a functional NPHP1-4-8 module localized to cell-cell contacts and the ciliary transition zone; NPHP4 mediates the interaction between NPHP1 and RPGRIP1L. Interacts with IQCB1; the interaction likely requires additional interactors. Interacts with TBXA2R (via C-terminus), RPGR, NEK4. Interacts with NPHP4, INVS and DVL2; proposed to form a complex involved in DVL2 stabilization. Interacts with PSMD2. As to expression, ubiquitously expressed. Not found in heart and skin.

It localises to the cytoplasm. Its subcellular location is the cytoskeleton. The protein resides in the cilium basal body. It is found in the cilium axoneme. The protein localises to the microtubule organizing center. It localises to the centrosome. Its subcellular location is the cell junction. The protein resides in the tight junction. In terms of biological role, negatively regulates signaling through the G-protein coupled thromboxane A2 receptor (TBXA2R). May be involved in mechanisms like programmed cell death, craniofacial development, patterning of the limbs, and formation of the left-right axis. Involved in the organization of apical junctions; the function is proposed to implicate a NPHP1-4-8 module. Does not seem to be strictly required for ciliogenesis. Involved in establishment of planar cell polarity such as in cochlear sensory epithelium and is proposed to implicate stabilization of disheveled proteins. Involved in regulation of proteasomal activity at the primary cilium probably implicating association with PSDM2. This chain is Protein fantom (Rpgrip1l), found in Mus musculus (Mouse).